Here is a 103-residue protein sequence, read N- to C-terminus: N(4)-acetylcytidine amidohydrolase (103 aa).

The ASCH domain occupies 6 to 94 (ITFFQRFQDD…IAGIYPDQTQ (89 aa)). Catalysis depends on Lys-21, which acts as the Proton acceptor. Residue Thr-24 is the Nucleophile of the active site. Glu-74 serves as the catalytic Proton donor.

Belongs to the N(4)-acetylcytidine amidohydrolase family.

The catalysed reaction is N(4)-acetylcytidine + H2O = cytidine + acetate + H(+). The enzyme catalyses N(4)-acetyl-2'-deoxycytidine + H2O = 2'-deoxycytidine + acetate + H(+). It catalyses the reaction N(4)-acetylcytosine + H2O = cytosine + acetate + H(+). In terms of biological role, catalyzes the hydrolysis of N(4)-acetylcytidine (ac4C). The sequence is that of N(4)-acetylcytidine amidohydrolase from Citrobacter koseri (strain ATCC BAA-895 / CDC 4225-83 / SGSC4696).